The sequence spans 353 residues: Holliday junction branch migration complex subunit RuvB (353 aa).

Residues 1-25 form a disordered region; the sequence is MDPGPAGDEVSLAPQQETAEQDVET. A large ATPase domain (RuvB-L) region spans residues 1–188; that stretch reads MDPGPAGDEV…FGFTAHMEFY (188 aa). ATP is bound by residues leucine 27, arginine 28, glycine 69, lysine 72, threonine 73, serine 74, 135–137, arginine 178, tyrosine 188, and arginine 225; that span reads EDY. Position 73 (threonine 73) interacts with Mg(2+). A small ATPAse domain (RuvB-S) region spans residues 189 to 259; sequence EPAELELVVR…VARAALEVYD (71 aa). Residues 262–353 form a head domain (RuvB-H) region; it reads EHGLDRLDRA…ATRSLFADEV (92 aa). Residues arginine 317 and arginine 322 each contribute to the DNA site.

Belongs to the RuvB family. In terms of assembly, homohexamer. Forms an RuvA(8)-RuvB(12)-Holliday junction (HJ) complex. HJ DNA is sandwiched between 2 RuvA tetramers; dsDNA enters through RuvA and exits via RuvB. An RuvB hexamer assembles on each DNA strand where it exits the tetramer. Each RuvB hexamer is contacted by two RuvA subunits (via domain III) on 2 adjacent RuvB subunits; this complex drives branch migration. In the full resolvosome a probable DNA-RuvA(4)-RuvB(12)-RuvC(2) complex forms which resolves the HJ.

The protein resides in the cytoplasm. The enzyme catalyses ATP + H2O = ADP + phosphate + H(+). Functionally, the RuvA-RuvB-RuvC complex processes Holliday junction (HJ) DNA during genetic recombination and DNA repair, while the RuvA-RuvB complex plays an important role in the rescue of blocked DNA replication forks via replication fork reversal (RFR). RuvA specifically binds to HJ cruciform DNA, conferring on it an open structure. The RuvB hexamer acts as an ATP-dependent pump, pulling dsDNA into and through the RuvAB complex. RuvB forms 2 homohexamers on either side of HJ DNA bound by 1 or 2 RuvA tetramers; 4 subunits per hexamer contact DNA at a time. Coordinated motions by a converter formed by DNA-disengaged RuvB subunits stimulates ATP hydrolysis and nucleotide exchange. Immobilization of the converter enables RuvB to convert the ATP-contained energy into a lever motion, pulling 2 nucleotides of DNA out of the RuvA tetramer per ATP hydrolyzed, thus driving DNA branch migration. The RuvB motors rotate together with the DNA substrate, which together with the progressing nucleotide cycle form the mechanistic basis for DNA recombination by continuous HJ branch migration. Branch migration allows RuvC to scan DNA until it finds its consensus sequence, where it cleaves and resolves cruciform DNA. In Saccharopolyspora erythraea (strain ATCC 11635 / DSM 40517 / JCM 4748 / NBRC 13426 / NCIMB 8594 / NRRL 2338), this protein is Holliday junction branch migration complex subunit RuvB.